The sequence spans 343 residues: DNA polymerase III subunit delta (343 aa).

3 domain regions span residues 1 to 140 (MIRL…VTCQ), 141 to 210 (TPEQ…NDAA), and 211 to 343 (HFTP…FIDG).

Belongs to the DNA polymerase HolA subunit family. In terms of assembly, the DNA polymerase III holoenzyme complex contains at least 10 different subunits organized into 3 functionally essential subassemblies: the Pol III core, the beta sliding clamp processivity factor and the clamp-loading complex. The Pol III core (subunits alpha, epsilon and theta) contains the polymerase and the 3'-5' exonuclease proofreading activities. The polymerase is tethered to the template via the dimeric beta sliding clamp processivity factor. The clamp-loading complex (also called gamma complex) assembles the beta sliding clamp onto the primed template and plays a central role in the organization and communication at the replication fork. The clamp-loading complex contains delta, delta', psi and chi, and 3 copies of either or both of two different DnaX proteins, gamma and tau. The DNA replisome complex has a single clamp loader (3 tau and 1 each of delta, delta', psi and chi subunits) which binds 3 Pol III cores (1 core on the leading strand and 2 on the lagging strand) each with a beta sliding clamp dimer. Additional proteins in the replisome are other copies of gamma, psi and chi, Ssb, DNA helicase and RNA primase. The clamp loader hydrolyzes ATP to assemble the beta processivity factor onto the primed template and plays a central role in the organization and communication at the replication fork; the minimal complex to load the beta sliding clamp on DNA is delta, delta', gamma.

The enzyme catalyses DNA(n) + a 2'-deoxyribonucleoside 5'-triphosphate = DNA(n+1) + diphosphate. Functionally, part of the beta sliding clamp loading complex, which hydrolyzes ATP to load the beta clamp onto primed DNA to form the DNA replication pre-initiation complex. DNA polymerase III is a complex, multichain enzyme responsible for most of the replicative synthesis in bacteria. This DNA polymerase also exhibits 3'-5' exonuclease activity. The delta subunit is the wrench that will open the beta subunit dimer, which has been modeled to leave a gap large enough for ssDNA to pass through. The gamma complex (gamma(3),delta,delta') is thought to load beta dimers onto DNA by binding ATP which alters the complex's conformation so it can bind beta sliding clamp dimers and open them at one interface. Primed DNA is recognized, ATP is hydrolyzed releasing the gamma complex and closing the beta sliding clamp ring around the primed DNA. The protein is DNA polymerase III subunit delta (holA) of Escherichia coli (strain K12).